The primary structure comprises 598 residues: Dihydroxy-acid dehydratase, mitochondrial (598 aa).

The N-terminal 18 residues, 1–18 (MMFCKLLRCQNGIASKRA), are a transit peptide targeting the mitochondrion. Cys-84 lines the [2Fe-2S] cluster pocket. Residue Asp-116 coordinates Mg(2+). Cys-157 contributes to the [2Fe-2S] cluster binding site. Asp-158 contributes to the Mg(2+) binding site. Cys-232 contributes to the [2Fe-2S] cluster binding site. Mg(2+) is bound at residue Glu-485. Ser-511 serves as the catalytic Proton acceptor.

Belongs to the IlvD/Edd family. It depends on [2Fe-2S] cluster as a cofactor. Mg(2+) is required as a cofactor.

Its subcellular location is the mitochondrion. It catalyses the reaction (2R)-2,3-dihydroxy-3-methylbutanoate = 3-methyl-2-oxobutanoate + H2O. The enzyme catalyses (2R,3R)-2,3-dihydroxy-3-methylpentanoate = (S)-3-methyl-2-oxopentanoate + H2O. It participates in amino-acid biosynthesis; L-isoleucine biosynthesis; L-isoleucine from 2-oxobutanoate: step 3/4. It functions in the pathway amino-acid biosynthesis; L-valine biosynthesis; L-valine from pyruvate: step 3/4. In terms of biological role, dihydroxyacid dehydratase that catalyzes the third step in the common pathway leading to biosynthesis of branched-chain amino acids. Catalyzes the dehydration of (2R,3R)-2,3-dihydroxy-3-methylpentanoate (2,3-dihydroxy-3-methylvalerate) into 2-oxo-3-methylpentanoate (2-oxo-3-methylvalerate) and of (2R)-2,3-dihydroxy-3-methylbutanoate (2,3-dihydroxyisovalerate) into 2-oxo-3-methylbutanoate (2-oxoisovalerate), the penultimate precursor to L-isoleucine and L-valine, respectively. The sequence is that of Dihydroxy-acid dehydratase, mitochondrial from Schizosaccharomyces pombe (strain 972 / ATCC 24843) (Fission yeast).